Here is a 510-residue protein sequence, read N- to C-terminus: 2,3-bisphosphoglycerate-independent phosphoglycerate mutase (510 aa).

Residues D13 and S63 each coordinate Mn(2+). S63 functions as the Phosphoserine intermediate in the catalytic mechanism. Substrate is bound by residues H124, R154–D155, R186, R192, R262–R265, and K334. Residues D401, H405, D442, H443, and H461 each coordinate Mn(2+).

The protein belongs to the BPG-independent phosphoglycerate mutase family. As to quaternary structure, monomer. Requires Mn(2+) as cofactor.

It carries out the reaction (2R)-2-phosphoglycerate = (2R)-3-phosphoglycerate. It functions in the pathway carbohydrate degradation; glycolysis; pyruvate from D-glyceraldehyde 3-phosphate: step 3/5. In terms of biological role, catalyzes the interconversion of 2-phosphoglycerate and 3-phosphoglycerate. The protein is 2,3-bisphosphoglycerate-independent phosphoglycerate mutase of Vibrio parahaemolyticus serotype O3:K6 (strain RIMD 2210633).